Here is an 86-residue protein sequence, read N- to C-terminus: Defensin-like protein 97 (86 aa).

Residues 1-27 form the signal peptide; that stretch reads MGSLRVSTFAVAVVVCLSILLMSPTDG. 4 cysteine pairs are disulfide-bonded: C31/C74, C38/C60, C44/C71, and C48/C73.

It belongs to the DEFL family.

It localises to the secreted. This is Defensin-like protein 97 (LCR85) from Arabidopsis thaliana (Mouse-ear cress).